Consider the following 779-residue polypeptide: MKRKLFWICAVAMGMSAFPSFMTQATPATQPLINAEPAVAAQTEQNPQVGQVMPGVQGADAPVVAQNGPSRDVKLTFAQIAPPPGSMVLRGINPNGSIEFGMRSDEVVTKAMLNLEYTPSPSLLPVQSQLKVYLNDELMGVLPVTKEQLGKKTLAQMPINPLFISDFNRVRLEFVGHYQDVCEKPASTTLWLDVGRSSGLDLTYQTLNVKNDLSHFPVPFFDPSDNRTNTLPMVFAGAPDVGLQQASAIVASWFGSRSGWRGQNFPVLYNQLPDRNAIVFATNDKRPDFLRDHPAVKAPVIEMINHPQNPYVKLLVVFGRDDKDLLQAAKGIAQGNILFRGESVVVNEVKPLLPRKPYDAPNWVRTDRPVTFGELKTYEEQLQSSGLEPAAINVSLNLPPDLYLMRSTGIDMDINYRYTMPPVKDSSRMDISLNNQFLQSFNLSSKQEANRLLLRIPVLQGLLDGKTDVSIPALKLGATNQLRFDFEYMNPMPGGSVDNCITFQPVQNHVVIGDDSTIDFSKYYHFIPMPDLRAFANAGFPFSRMADLSQTITVMPKAPNEAQMETLLNTVGFIGAQTGFPAINLTVTDDGSTIQGKDADIMIIGGIPDKLKDDKQIDLLVQATESWVKTPMRQTPFPGIVPDESDRAAETRSTLTSSGAMAAVIGFQSPYNDQRSVIALLADSPRGYEMLNDAVNDSGKRATMFGSVAVIRESGINSLRVGDVYYVGHLPWFERVWYALANHPILLAVLAAISVILLAWVLWRLLRIISRRRLNPDNE.

Residues 1–25 (MKRKLFWICAVAMGMSAFPSFMTQA) form the signal peptide. The Periplasmic segment spans residues 26–742 (TPATQPLINA…FERVWYALAN (717 aa)). Residues 743–763 (HPILLAVLAAISVILLAWVLW) form a helical membrane-spanning segment. Over 764 to 779 (RLLRIISRRRLNPDNE) the chain is Cytoplasmic.

The protein belongs to the AcsB/BcsB family. As to quaternary structure, tightly associated with the cellulose synthase catalytic subunit.

It is found in the cell inner membrane. The protein operates within glycan metabolism; bacterial cellulose biosynthesis. Its function is as follows. Binds the cellulose synthase activator, bis-(3'-5') cyclic diguanylic acid (c-di-GMP). The protein is Cyclic di-GMP-binding protein (bcsB) of Escherichia coli (strain K12).